Here is a 161-residue protein sequence, read N- to C-terminus: Phosphopantetheine adenylyltransferase (161 aa).

S9 serves as a coordination point for substrate. ATP is bound by residues 9 to 10 and H17; that span reads SF. 3 residues coordinate substrate: K41, L73, and K87. Residues 88-90, E98, and 123-129 each bind ATP; these read GLR and YSYLSSS.

It belongs to the bacterial CoaD family. As to quaternary structure, homohexamer. Requires Mg(2+) as cofactor.

It localises to the cytoplasm. It catalyses the reaction (R)-4'-phosphopantetheine + ATP + H(+) = 3'-dephospho-CoA + diphosphate. Its pathway is cofactor biosynthesis; coenzyme A biosynthesis; CoA from (R)-pantothenate: step 4/5. Its function is as follows. Reversibly transfers an adenylyl group from ATP to 4'-phosphopantetheine, yielding dephospho-CoA (dPCoA) and pyrophosphate. The protein is Phosphopantetheine adenylyltransferase of Clostridium novyi (strain NT).